The primary structure comprises 148 residues: SsrA-binding protein (148 aa).

Residues 127 to 142 (KRESEKERDWERDKAR) show a composition bias toward basic and acidic residues. Positions 127–148 (KRESEKERDWERDKARLMRVKT) are disordered.

This sequence belongs to the SmpB family.

It is found in the cytoplasm. Its function is as follows. Required for rescue of stalled ribosomes mediated by trans-translation. Binds to transfer-messenger RNA (tmRNA), required for stable association of tmRNA with ribosomes. tmRNA and SmpB together mimic tRNA shape, replacing the anticodon stem-loop with SmpB. tmRNA is encoded by the ssrA gene; the 2 termini fold to resemble tRNA(Ala) and it encodes a 'tag peptide', a short internal open reading frame. During trans-translation Ala-aminoacylated tmRNA acts like a tRNA, entering the A-site of stalled ribosomes, displacing the stalled mRNA. The ribosome then switches to translate the ORF on the tmRNA; the nascent peptide is terminated with the 'tag peptide' encoded by the tmRNA and targeted for degradation. The ribosome is freed to recommence translation, which seems to be the essential function of trans-translation. The sequence is that of SsrA-binding protein from Aromatoleum aromaticum (strain DSM 19018 / LMG 30748 / EbN1) (Azoarcus sp. (strain EbN1)).